The chain runs to 792 residues: Cis-abienol synthase, chloroplastic (792 aa).

Residues 1 to 37 (MVLGLRSKIIPLPDHKLGNIKLGSVTNAICHRPCRVR) constitute a chloroplast transit peptide. Positions 539, 543, 684, and 692 each coordinate Mg(2+). The DDXXD motif signature appears at 539 to 543 (DDFFD).

It belongs to the terpene synthase family. The cofactor is Mg(2+). Expressed specifically in trichomes.

The protein resides in the plastid. It localises to the chloroplast. The enzyme catalyses 8-hydroxycopalyl diphosphate = cis-abienol + diphosphate. It functions in the pathway secondary metabolite biosynthesis; terpenoid biosynthesis. Involved in the biosynthesis of cis-abienol, a labdane diterpene that can be used as synthesis precursor of ambergris substitution fragance products. In Nicotiana tabacum (Common tobacco), this protein is Cis-abienol synthase, chloroplastic.